The chain runs to 207 residues: MLNKLSRLLADAGISLTDHQKTLLVAYVDMLHKWNKAYNLTSVRDPNEMLVRHILDSIVVAPYLQGQRFIDVGTGPGLPGIPLAIVLPDAHFTLLDSLGKRVRFLRQVQHELKLENITPVQSRVEAYPSEPPFDGVISRAFASLNDMVSWCHQLPGEKGRFYALKGHLPGDEIASLPDDFSVESVEKLRVPQLEGERHLVIIKSNKV.

Residues Gly-73, Leu-78, 124–125 (VE), and Arg-139 each bind S-adenosyl-L-methionine.

Belongs to the methyltransferase superfamily. RNA methyltransferase RsmG family.

It is found in the cytoplasm. It catalyses the reaction guanosine(527) in 16S rRNA + S-adenosyl-L-methionine = N(7)-methylguanosine(527) in 16S rRNA + S-adenosyl-L-homocysteine. Its function is as follows. Specifically methylates the N7 position of guanine in position 527 of 16S rRNA. In Salmonella schwarzengrund (strain CVM19633), this protein is Ribosomal RNA small subunit methyltransferase G.